The sequence spans 90 residues: WAP four-disulfide core domain protein 12 (90 aa).

The N-terminal stretch at 1–23 is a signal peptide; it reads MGSSSFLVLMVSLALVTLVAVEG. A WAP domain is found at 27-74; sequence GIEKAGVCPADNVRCFKSDPPQCHTDQDCLGERKCCYLHCGFKCVIPV. 4 disulfide bridges follow: Cys34/Cys62, Cys41/Cys66, Cys49/Cys61, and Cys55/Cys70.

Its subcellular location is the secreted. Antibacterial protein. Putative acid-stable proteinase inhibitor. This chain is WAP four-disulfide core domain protein 12 (WFDC12), found in Pongo abelii (Sumatran orangutan).